The sequence spans 173 residues: MKVAVFPGSFDPLTLGHLDLIKRGSALFDQLAVAVMTNESKNPLFTVEERVAQIKEAVSGLDNVSVITTEGLTVDLMNRIGADYLMRGLRNTTDFQYERDIAAMNNFLDDQCETVFFLAKPEYQHLSSSLLKEVTSAGGDISAYLPANINEALKKRLMEREMLRVKKDNEKAR.

Position 9 (S9) interacts with substrate. ATP contacts are provided by residues 9–10 and H17; that span reads SF. Substrate contacts are provided by K41, T73, and R87. Residues 88 to 90, E98, and 123 to 129 each bind ATP; these read GLR and YQHLSSS.

It belongs to the bacterial CoaD family. Homohexamer. It depends on Mg(2+) as a cofactor.

It is found in the cytoplasm. It catalyses the reaction (R)-4'-phosphopantetheine + ATP + H(+) = 3'-dephospho-CoA + diphosphate. The protein operates within cofactor biosynthesis; coenzyme A biosynthesis; CoA from (R)-pantothenate: step 4/5. In terms of biological role, reversibly transfers an adenylyl group from ATP to 4'-phosphopantetheine, yielding dephospho-CoA (dPCoA) and pyrophosphate. This Limosilactobacillus reuteri (strain DSM 20016) (Lactobacillus reuteri) protein is Phosphopantetheine adenylyltransferase.